A 319-amino-acid chain; its full sequence is Curved DNA-binding protein (319 aa).

Positions 5-69 (DYYKILGVEP…QKRAEFDEIR (65 aa)) constitute a J domain.

Its subcellular location is the cytoplasm. The protein localises to the nucleoid. DNA-binding protein that preferentially recognizes a curved DNA sequence. It is probably a functional analog of DnaJ; displays overlapping activities with DnaJ, but functions under different conditions, probably acting as a molecular chaperone in an adaptive response to environmental stresses other than heat shock. Lacks autonomous chaperone activity; binds native substrates and targets them for recognition by DnaK. Its activity is inhibited by the binding of CbpM. This Pseudomonas putida (strain ATCC 47054 / DSM 6125 / CFBP 8728 / NCIMB 11950 / KT2440) protein is Curved DNA-binding protein.